We begin with the raw amino-acid sequence, 147 residues long: Large ribosomal subunit protein uL13 (147 aa).

Belongs to the universal ribosomal protein uL13 family. Part of the 50S ribosomal subunit.

Its function is as follows. This protein is one of the early assembly proteins of the 50S ribosomal subunit, although it is not seen to bind rRNA by itself. It is important during the early stages of 50S assembly. This Nocardia farcinica (strain IFM 10152) protein is Large ribosomal subunit protein uL13.